Here is a 324-residue protein sequence, read N- to C-terminus: Lactonase drp35 (324 aa).

Positions 47, 109, 111, 129, 132, 134, 137, 184, 235, and 236 each coordinate Ca(2+). Asp235 acts as the Proton donor in catalysis.

It belongs to the SMP-30/CGR1 family. It depends on Ca(2+) as a cofactor.

The protein resides in the cytoplasm. In terms of biological role, exhibits lactonase activity. Acts in cells with perturbed membrane integrity and is possibly related to the membrane homeostasis. The protein is Lactonase drp35 (drp35) of Staphylococcus aureus (strain USA300).